A 590-amino-acid chain; its full sequence is Aspartate--tRNA(Asp/Asn) ligase (590 aa).

Position 173 (glutamate 173) interacts with L-aspartate. Residues glutamine 197 to lysine 200 are aspartate. Arginine 219 contributes to the L-aspartate binding site. Residues arginine 219 to glutamate 221 and glutamine 228 each bind ATP. Residue histidine 450 coordinates L-aspartate. Glutamate 484 is an ATP binding site. Arginine 491 serves as a coordination point for L-aspartate. Glycine 536–arginine 539 contributes to the ATP binding site.

This sequence belongs to the class-II aminoacyl-tRNA synthetase family. Type 1 subfamily. Homodimer.

The protein localises to the cytoplasm. The enzyme catalyses tRNA(Asx) + L-aspartate + ATP = L-aspartyl-tRNA(Asx) + AMP + diphosphate. In terms of biological role, aspartyl-tRNA synthetase with relaxed tRNA specificity since it is able to aspartylate not only its cognate tRNA(Asp) but also tRNA(Asn). Reaction proceeds in two steps: L-aspartate is first activated by ATP to form Asp-AMP and then transferred to the acceptor end of tRNA(Asp/Asn). The protein is Aspartate--tRNA(Asp/Asn) ligase of Coxiella burnetii (strain Dugway 5J108-111).